The following is a 426-amino-acid chain: Casein kinase I (426 aa).

The 270-residue stretch at 9–278 (YRISRKIGGG…LRKLLREMFV (270 aa)) folds into the Protein kinase domain. ATP contacts are provided by residues 15–23 (IGGGSFGEI) and Lys-38. Asp-128 (proton acceptor) is an active-site residue. Disordered regions lie at residues 340–360 (TTTT…TVSN) and 377–426 (PSYN…PPAK). Positions 345 to 360 (SSSQPSNVKNISTVSN) are enriched in polar residues. Residues 386–404 (QSPQQTTTTTSSSNPNQTT) show a composition bias toward low complexity. Residues 414 to 426 (PQSSSTTTKPPAK) show a composition bias toward polar residues.

The protein belongs to the protein kinase superfamily. CK1 Ser/Thr protein kinase family. Casein kinase I subfamily. As to quaternary structure, monomer. Post-translationally, autophosphorylated.

The protein localises to the cytoplasm. It localises to the nucleus. It carries out the reaction L-seryl-[protein] + ATP = O-phospho-L-seryl-[protein] + ADP + H(+). The catalysed reaction is L-threonyl-[protein] + ATP = O-phospho-L-threonyl-[protein] + ADP + H(+). Casein kinases are operationally defined by their preferential utilization of acidic proteins such as caseins as substrates. Can phosphorylate a large number of proteins. May have a role in DNA repair mechanism and support vegetative growth of the cells. This is Casein kinase I (cak1-1) from Dictyostelium discoideum (Social amoeba).